The chain runs to 274 residues: Thymidylate synthase (274 aa).

Arg-21 lines the dUMP pocket. His-51 provides a ligand contact to (6R)-5,10-methylene-5,6,7,8-tetrahydrofolate. 123–124 (RR) is a dUMP binding site. Catalysis depends on Cys-156, which acts as the Nucleophile. DUMP-binding positions include 176-179 (RSAD), Asn-187, and 217-219 (HIY). Asp-179 is a (6R)-5,10-methylene-5,6,7,8-tetrahydrofolate binding site. Ser-273 serves as a coordination point for (6R)-5,10-methylene-5,6,7,8-tetrahydrofolate.

It belongs to the thymidylate synthase family. Bacterial-type ThyA subfamily. As to quaternary structure, homodimer.

The protein localises to the cytoplasm. It catalyses the reaction dUMP + (6R)-5,10-methylene-5,6,7,8-tetrahydrofolate = 7,8-dihydrofolate + dTMP. It participates in pyrimidine metabolism; dTTP biosynthesis. In terms of biological role, catalyzes the reductive methylation of 2'-deoxyuridine-5'-monophosphate (dUMP) to 2'-deoxythymidine-5'-monophosphate (dTMP) while utilizing 5,10-methylenetetrahydrofolate (mTHF) as the methyl donor and reductant in the reaction, yielding dihydrofolate (DHF) as a by-product. This enzymatic reaction provides an intracellular de novo source of dTMP, an essential precursor for DNA biosynthesis. In Francisella tularensis subsp. holarctica (strain FTNF002-00 / FTA), this protein is Thymidylate synthase.